Here is a 790-residue protein sequence, read N- to C-terminus: Polyribonucleotide nucleotidyltransferase (790 aa).

2 residues coordinate Mg(2+): D498 and D504. The region spanning 565–624 (PRILRIKIKPEQIGEVIGPGGRVIRAIQEQTGTKISIEEDGTVFISAANEDAARRAVREI) is the KH domain. One can recognise an S1 motif domain in the interval 634 to 702 (GEIFYGRVVT…PDGKINLSRK (69 aa)). Residues 710–790 (AERAATAQAP…KELLGEDEPN (81 aa)) are disordered. The span at 739-755 (PERRPGPPTPRRPEQRG) shows a compositional bias: basic and acidic residues. Positions 757–772 (SRPPRPQAQRSTPPPG) are enriched in pro residues.

This sequence belongs to the polyribonucleotide nucleotidyltransferase family. Requires Mg(2+) as cofactor.

The protein localises to the cytoplasm. The enzyme catalyses RNA(n+1) + phosphate = RNA(n) + a ribonucleoside 5'-diphosphate. Functionally, involved in mRNA degradation. Catalyzes the phosphorolysis of single-stranded polyribonucleotides processively in the 3'- to 5'-direction. The sequence is that of Polyribonucleotide nucleotidyltransferase from Thermomicrobium roseum (strain ATCC 27502 / DSM 5159 / P-2).